The sequence spans 133 residues: uncharacterized protein (133 aa).

It belongs to the ycf68 family.

The protein resides in the plastid. It localises to the chloroplast. This is an uncharacterized protein from Oryza sativa subsp. japonica (Rice).